Reading from the N-terminus, the 217-residue chain is MLDISIAIDGPAGAGKSTIAKIIGNKLNIMYINTGSMYRAVTLMALKNNIEPYDIESLKALINSMNISFNGNNIIVNGKDLEEDIRMPIINNNVSKYAAVEEVRELLVSMQQNISKKYNVVMDGRDIGTVVLKDAPYKFFITASAEVRAKRRLKELKEKGININFRDVLKEIKERDYIDSNRKVNPLKQSKDAILIDTSNFTIEEVVDKICNIIKKD.

Position 10–18 (10–18) interacts with ATP; it reads GPAGAGKST.

The protein belongs to the cytidylate kinase family. Type 1 subfamily.

It is found in the cytoplasm. It carries out the reaction CMP + ATP = CDP + ADP. It catalyses the reaction dCMP + ATP = dCDP + ADP. This Clostridium botulinum (strain Okra / Type B1) protein is Cytidylate kinase.